The primary structure comprises 305 residues: tRNA pseudouridine synthase B (305 aa).

D39 (nucleophile) is an active-site residue.

It belongs to the pseudouridine synthase TruB family. Type 1 subfamily.

The enzyme catalyses uridine(55) in tRNA = pseudouridine(55) in tRNA. Its function is as follows. Responsible for synthesis of pseudouridine from uracil-55 in the psi GC loop of transfer RNAs. In Staphylococcus aureus (strain MW2), this protein is tRNA pseudouridine synthase B.